Consider the following 291-residue polypeptide: 33 kDa chaperonin (291 aa).

Cystine bridges form between Cys237/Cys239 and Cys270/Cys273.

The protein belongs to the HSP33 family. Post-translationally, under oxidizing conditions two disulfide bonds are formed involving the reactive cysteines. Under reducing conditions zinc is bound to the reactive cysteines and the protein is inactive.

The protein localises to the cytoplasm. Its function is as follows. Redox regulated molecular chaperone. Protects both thermally unfolding and oxidatively damaged proteins from irreversible aggregation. Plays an important role in the bacterial defense system toward oxidative stress. The protein is 33 kDa chaperonin of Bacillus cereus (strain B4264).